The chain runs to 272 residues: PHD finger protein ALFIN-LIKE 6 (272 aa).

The segment covering 1–23 has biased composition (gly residues); that stretch reads MEGGGGGGGGGGGGGGGGGGGGA. Disordered regions lie at residues 1–24 and 162–218; these read MEGG…GGAP and QAKE…DNTL. Over residues 168–182 the composition is skewed to low complexity; that stretch reads PNSSSKSNKPSSKVQ. A compositionally biased stretch (basic and acidic residues) spans 183 to 200; that stretch reads SKAESRSKSKLSAPKDEE. The segment covering 201-214 has biased composition (acidic residues); the sequence is GSGDDEGEEEEDDH. A PHD-type zinc finger spans residues 216-268; the sequence is NTLCGTCGTNDGKDEFWICCDNCEKWYHGKCVKITPARAEHIKQYKCPDCTNK.

The protein belongs to the Alfin family.

It localises to the nucleus. In terms of biological role, histone-binding component that specifically recognizes H3 tails trimethylated on 'Lys-4' (H3K4me3), which mark transcription start sites of virtually all active genes. This is PHD finger protein ALFIN-LIKE 6 from Oryza sativa subsp. japonica (Rice).